The sequence spans 307 residues: Isethionate sulfite-lyase activating enzyme (307 aa).

The 286-residue stretch at 22-307 folds into the Radical SAM core domain; it reads HDGPGIRTVV…EAVVAQTADS (286 aa). Residues cysteine 36, cysteine 40, cysteine 43, cysteine 62, cysteine 68, cysteine 71, cysteine 75, cysteine 95, cysteine 98, cysteine 102, and cysteine 106 each coordinate [4Fe-4S] cluster. 42–44 serves as a coordination point for S-adenosyl-L-methionine; sequence WCS. 2 4Fe-4S ferredoxin-type domains span residues 53–85 and 86–117; these read VELA…RAED and DTIS…YGAH. Residues glycine 146, 195–197, and histidine 268 each bind S-adenosyl-L-methionine; that span reads DIK.

The protein belongs to the organic radical-activating enzymes family. As to quaternary structure, monomer. Requires [4Fe-4S] cluster as cofactor.

It carries out the reaction glycyl-[protein] + reduced [flavodoxin] + S-adenosyl-L-methionine = glycin-2-yl radical-[protein] + semiquinone [flavodoxin] + 5'-deoxyadenosine + L-methionine + H(+). It participates in organosulfur degradation; alkanesulfonate degradation. In terms of biological role, involved in an anaerobic respiration pathway that converts the sulfonate isethionate (2-hydroxyethanesulfonate) to ammonia, acetate and sulfide. Catalyzes activation of the isethionate sulfite-lyase IseG under anaerobic conditions by generation of an organic free radical on a glycine residue, via a homolytic cleavage of S-adenosyl-L-methionine (SAM). This Nitratidesulfovibrio vulgaris (strain ATCC 29579 / DSM 644 / CCUG 34227 / NCIMB 8303 / VKM B-1760 / Hildenborough) (Desulfovibrio vulgaris) protein is Isethionate sulfite-lyase activating enzyme.